The chain runs to 296 residues: Cobalamin trafficking protein CblD (296 aa).

A mitochondrion-targeting transit peptide spans 1–38 (MAHVLCNRARLVSYLPGFCSLVKRVINPRAFSTAGSSG). Lys-203 is subject to N6-acetyllysine.

As to quaternary structure, heterodimer with MMACHC. Forms a multiprotein complex with MMACHC, MTR and MTRR.

It localises to the cytoplasm. It is found in the mitochondrion. Functionally, involved in cobalamin metabolism and trafficking. Plays a role in regulating the biosynthesis and the proportion of two coenzymes, methylcob(III)alamin (MeCbl) and 5'-deoxyadenosylcobalamin (AdoCbl). Promotes oxidation of cob(II)alamin bound to MMACHC. The processing of cobalamin in the cytosol occurs in a multiprotein complex composed of at least MMACHC, MMADHC, MTRR (methionine synthase reductase) and MTR (methionine synthase) which may contribute to shuttle safely and efficiently cobalamin towards MTR in order to produce methionine. The chain is Cobalamin trafficking protein CblD from Mus musculus (Mouse).